The following is an 897-amino-acid chain: Beta-galactosidase (897 aa).

Glu-459 acts as the Proton donor in catalysis. Catalysis depends on Glu-525, which acts as the Nucleophile.

Belongs to the glycosyl hydrolase 2 family.

The enzyme catalyses Hydrolysis of terminal non-reducing beta-D-galactose residues in beta-D-galactosides.. The polypeptide is Beta-galactosidase (cbgA) (Clostridium acetobutylicum).